Consider the following 140-residue polypeptide: ATP synthase epsilon chain (140 aa).

The protein belongs to the ATPase epsilon chain family. F-type ATPases have 2 components, CF(1) - the catalytic core - and CF(0) - the membrane proton channel. CF(1) has five subunits: alpha(3), beta(3), gamma(1), delta(1), epsilon(1). CF(0) has three main subunits: a, b and c.

It localises to the cell membrane. Its function is as follows. Produces ATP from ADP in the presence of a proton gradient across the membrane. In Enterococcus hirae (strain ATCC 9790 / DSM 20160 / JCM 8729 / LMG 6399 / NBRC 3181 / NCIMB 6459 / NCDO 1258 / NCTC 12367 / WDCM 00089 / R), this protein is ATP synthase epsilon chain (atpC).